The sequence spans 239 residues: Protein TrbH (239 aa).

Residues 208–228 (TVVSIICLLMWICLVYIHCGI) form a helical membrane-spanning segment.

It localises to the cell inner membrane. In Escherichia coli (strain K12), this protein is Protein TrbH (trbH).